The following is a 252-amino-acid chain: Probable endonuclease 4 (252 aa).

Positions 56, 96, 129, 162, 165, 191, 204, 206, and 233 each coordinate Zn(2+).

This sequence belongs to the AP endonuclease 2 family. It depends on Zn(2+) as a cofactor.

The catalysed reaction is Endonucleolytic cleavage to 5'-phosphooligonucleotide end-products.. Functionally, endonuclease IV plays a role in DNA repair. It cleaves phosphodiester bonds at apurinic or apyrimidinic (AP) sites, generating a 3'-hydroxyl group and a 5'-terminal sugar phosphate. This Mycobacterium ulcerans (strain Agy99) protein is Probable endonuclease 4.